Reading from the N-terminus, the 413-residue chain is GDP-mannose-dependent alpha-mannosyltransferase (413 aa).

The protein belongs to the glycosyltransferase group 1 family.

Its pathway is phospholipid metabolism; phosphatidylinositol metabolism. Functionally, catalyzes the addition of a mannose residue from GDP-D-mannose to GlcAGroAc2 to generate 1,2-di-O-C16/C18:1-(alpha-D-mannopyranosyl)-(1-4)-(alpha-D-glucopyranosyluronic acid)-(1-3)-glycerol(ManGlcAGroAc2). This chain is GDP-mannose-dependent alpha-mannosyltransferase (mgtA), found in Corynebacterium glutamicum (strain ATCC 13032 / DSM 20300 / JCM 1318 / BCRC 11384 / CCUG 27702 / LMG 3730 / NBRC 12168 / NCIMB 10025 / NRRL B-2784 / 534).